The sequence spans 711 residues: Polyribonucleotide nucleotidyltransferase (711 aa).

Positions 490 and 496 each coordinate Mg(2+). The KH domain maps to 557 to 616; it reads PRIETMQIPTDKIREVIGSGGKVIREIVETSGAKVDINDDGIIKIASANGEAIKKAYEMI. Residues 626 to 694 form the S1 motif domain; it reads GKVYTGTVVK…DRGKVRLSMK (69 aa).

This sequence belongs to the polyribonucleotide nucleotidyltransferase family. The cofactor is Mg(2+).

Its subcellular location is the cytoplasm. It catalyses the reaction RNA(n+1) + phosphate = RNA(n) + a ribonucleoside 5'-diphosphate. Functionally, involved in mRNA degradation. Catalyzes the phosphorolysis of single-stranded polyribonucleotides processively in the 3'- to 5'-direction. The protein is Polyribonucleotide nucleotidyltransferase of Dinoroseobacter shibae (strain DSM 16493 / NCIMB 14021 / DFL 12).